The primary structure comprises 258 residues: Enterotoxin type G (258 aa).

The signal sequence occupies residues 1–25 (MKKLSTVIIILILEIVFHNMNYVNA). Cys116 and Cys133 are oxidised to a cystine.

The protein belongs to the staphylococcal/streptococcal toxin family.

It is found in the secreted. In terms of biological role, staphylococcal enterotoxins cause the intoxication staphylococcal food poisoning syndrome. The illness is characterized by high fever, hypotension, diarrhea, shock, and in some cases death. The protein is Enterotoxin type G (entG) of Staphylococcus aureus (strain N315).